The following is a 359-amino-acid chain: Heme A synthase (359 aa).

5 helical membrane-spanning segments follow: residues 8–28 (IMSIWLIVSTLLLLLMIVVGG), 94–114 (LLGRITGIIIIIPFLIFYYLK), 124–144 (LLLITCLVIIQGFMGWYMVKS), 159–179 (GHLLLAVVIYHQLIAELLIII), and 215–235 (IIIFLLYTQIMFGALVAGLDA). Histidine 274 is a heme binding site. A run of 3 helical transmembrane segments spans residues 276 to 296 (WFGILISCLIICYAIWLIILN), 303 to 323 (MGMVAACLVLVQVTTGIITLV), and 328 to 348 (ILAALTHQVGAILILTTFLFI). Histidine 334 contributes to the heme binding site.

This sequence belongs to the COX15/CtaA family. Type 2 subfamily. As to quaternary structure, interacts with CtaB. Requires heme b as cofactor.

The protein localises to the cell membrane. It carries out the reaction Fe(II)-heme o + 2 A + H2O = Fe(II)-heme a + 2 AH2. It functions in the pathway porphyrin-containing compound metabolism; heme A biosynthesis; heme A from heme O: step 1/1. Catalyzes the conversion of heme O to heme A by two successive hydroxylations of the methyl group at C8. The first hydroxylation forms heme I, the second hydroxylation results in an unstable dihydroxymethyl group, which spontaneously dehydrates, resulting in the formyl group of heme A. The protein is Heme A synthase of Orientia tsutsugamushi (strain Ikeda) (Rickettsia tsutsugamushi).